A 529-amino-acid polypeptide reads, in one-letter code: Ribonuclease Y (529 aa).

A helical membrane pass occupies residues 4–24 (GLIYISLEVLVACLITALIMY). One can recognise a KH domain in the interval 216-297 (LTTRIALPCS…NRIEEVYHRV (82 aa)). Positions 342 to 435 (ALQHSKEVAL…VCAADALSAG (94 aa)) constitute an HD domain.

The protein belongs to the RNase Y family.

It localises to the cell membrane. Its function is as follows. Endoribonuclease that initiates mRNA decay. In Helicobacter pylori (strain HPAG1), this protein is Ribonuclease Y.